Consider the following 1377-residue polypeptide: Zinc finger MYM-type protein 2 (1377 aa).

Residues Lys48, Lys88, Lys98, and Lys104 each participate in a glycyl lysine isopeptide (Lys-Gly) (interchain with G-Cter in SUMO2) cross-link. 2 stretches are compositionally biased toward polar residues: residues 85 to 115 and 127 to 138; these read TSSK…SVSE and TNQGQEKNSSNF. Residues 85 to 177 are disordered; it reads TSSKNEELQG…GMGNSGITTE (93 aa). Over residues 139–152 the composition is skewed to basic and acidic residues; the sequence is IERRPPETKNRTND. Residue Lys147 forms a Glycyl lysine isopeptide (Lys-Gly) (interchain with G-Cter in SUMO2) linkage. Residues 153 to 164 are compositionally biased toward polar residues; the sequence is VDFSTSSFSRSK. Phosphoserine is present on Ser159. Residues Lys253 and Lys297 each participate in a glycyl lysine isopeptide (Lys-Gly) (interchain with G-Cter in SUMO2) cross-link. A disordered region spans residues 273–305; the sequence is NGESATHHNPDSWISQSASFPRNQKQPGVDSLS. Residues 284-298 show a composition bias toward polar residues; that stretch reads SWISQSASFPRNQKQ. Position 305 is a phosphoserine (Ser305). Residues Lys312, Lys325, Lys348, and Lys366 each participate in a glycyl lysine isopeptide (Lys-Gly) (interchain with G-Cter in SUMO2) cross-link. The MYM-type 1 zinc-finger motif lies at 327–363; sequence VKVTCANCKKPLQKGQTAYQRKGSAHLFCSTTCLSSF. Residues 369–409 form an MYM-type 2 zinc finger; that stretch reads PKKLCVMCKKDITTMKGTIVAQVDSSESFQEFCSTSCLSLY. Residues Lys417, Lys441, Lys491, Lys503, Lys513, Lys529, and Lys532 each participate in a glycyl lysine isopeptide (Lys-Gly) (interchain with G-Cter in SUMO2) cross-link. MYM-type zinc fingers lie at residues 421-456 and 463-502; these read NKSR…FNRY and IMNC…VSEY. An MYM-type 5 zinc finger spans residues 533-570; the sequence is LTTCTGCRTQCRFFDMTQCIGPNGYMEPYCSTACMNSH. Glycyl lysine isopeptide (Lys-Gly) (interchain with G-Cter in SUMO2) cross-links involve residues Lys576, Lys603, Lys649, Lys658, Lys688, Lys700, and Lys709. Residues 636–671 form an MYM-type 6 zinc finger; the sequence is QLKCNYCKNSFCSKPEILEWENKVHQFCSKTCSDDY. MYM-type zinc fingers lie at residues 723–758 and 764–799; these read RCVT…CKKF and KAAR…LLRF. Glycyl lysine isopeptide (Lys-Gly) (interchain with G-Cter in SUMO2) cross-links involve residues Lys764, Lys788, Lys812, and Lys829. Residues Ser838 and Ser958 each carry the phosphoserine modification. Disordered stretches follow at residues 983–1002 and 1028–1064; these read LLKN…PYEP and VFGE…SDNS. Positions 1039 to 1050 are enriched in basic residues; it reads PRSKKKGAKRKA. Ser1064 carries the phosphoserine modification. Thr1376 is modified (phosphothreonine).

May be a component of a BHC histone deacetylase complex that contains HDAC1, HDAC2, HMG20B/BRAF35, KDM1A, RCOR1/CoREST, PHF21A/BHC80, ZNF198, ZNF217, ZMYM3, GSE1 and GTF2I.

It localises to the nucleus. Functionally, may function as a transcription factor. This chain is Zinc finger MYM-type protein 2 (ZMYM2), found in Pongo abelii (Sumatran orangutan).